The sequence spans 247 residues: MKAVILIPARLDSSRLDRKMLADLEGEPLIVRTWRQALKSRLAEKVVVATDSREIAAVLDACGAEVVMTSPTASCGTERIAEAARHIEGDVFVNLQGDEPLISPENIDLALEPFFSENPPDCSTLVLPLRPDDHVQIEDPHQVKVVMDAKGFALYFSRSAIPFQRNMRPTTIVYRHIGLYAFSADVLQKFASLPPSMLEEAESLEQLRLLENGFRIQCVTTLVDNPGVNTVEDLEQVRRIIRSSLPG.

This sequence belongs to the KdsB family.

Its subcellular location is the cytoplasm. It carries out the reaction 3-deoxy-alpha-D-manno-oct-2-ulosonate + CTP = CMP-3-deoxy-beta-D-manno-octulosonate + diphosphate. The protein operates within nucleotide-sugar biosynthesis; CMP-3-deoxy-D-manno-octulosonate biosynthesis; CMP-3-deoxy-D-manno-octulosonate from 3-deoxy-D-manno-octulosonate and CTP: step 1/1. It functions in the pathway bacterial outer membrane biogenesis; lipopolysaccharide biosynthesis. Its function is as follows. Activates KDO (a required 8-carbon sugar) for incorporation into bacterial lipopolysaccharide in Gram-negative bacteria. The sequence is that of 3-deoxy-manno-octulosonate cytidylyltransferase from Pelodictyon phaeoclathratiforme (strain DSM 5477 / BU-1).